The primary structure comprises 285 residues: Probable cobalamin biosynthesis protein CobD (285 aa).

4 helical membrane-spanning segments follow: residues 10–32 (LIDL…GKVI), 45–67 (YLDF…ILSH), 145–167 (VIAP…RAVN), and 266–283 (VYWI…IILY).

The protein belongs to the CobD/CbiB family.

Its subcellular location is the cell membrane. The protein operates within cofactor biosynthesis; adenosylcobalamin biosynthesis. Functionally, converts cobyric acid to cobinamide by the addition of aminopropanol on the F carboxylic group. This Pyrococcus furiosus (strain ATCC 43587 / DSM 3638 / JCM 8422 / Vc1) protein is Probable cobalamin biosynthesis protein CobD.